The sequence spans 518 residues: Bifunctional purine biosynthesis protein PurH (518 aa).

Positions 1–144 constitute an MGS-like domain; the sequence is MSKRALISVS…KNHAAVTVVC (144 aa).

This sequence belongs to the PurH family.

It carries out the reaction (6R)-10-formyltetrahydrofolate + 5-amino-1-(5-phospho-beta-D-ribosyl)imidazole-4-carboxamide = 5-formamido-1-(5-phospho-D-ribosyl)imidazole-4-carboxamide + (6S)-5,6,7,8-tetrahydrofolate. It catalyses the reaction IMP + H2O = 5-formamido-1-(5-phospho-D-ribosyl)imidazole-4-carboxamide. It participates in purine metabolism; IMP biosynthesis via de novo pathway; 5-formamido-1-(5-phospho-D-ribosyl)imidazole-4-carboxamide from 5-amino-1-(5-phospho-D-ribosyl)imidazole-4-carboxamide (10-formyl THF route): step 1/1. Its pathway is purine metabolism; IMP biosynthesis via de novo pathway; IMP from 5-formamido-1-(5-phospho-D-ribosyl)imidazole-4-carboxamide: step 1/1. In Lactococcus lactis subsp. cremoris (strain MG1363), this protein is Bifunctional purine biosynthesis protein PurH.